Reading from the N-terminus, the 419-residue chain is Acyl-coenzyme A thioesterase 6 (419 aa).

Catalysis depends on charge relay system residues S232, D324, and H358. The Peroxisome targeting signal signature appears at 417 to 419; sequence SKL.

The protein belongs to the C/M/P thioester hydrolase family. In terms of tissue distribution, highly expressed in white adipose tissue. Detected at lower levels in kidney, liver, brown adipose tissue and brain.

The protein localises to the peroxisome. The catalysed reaction is pristanoyl-CoA + H2O = 2,6,10,14-tetramethylpentadecanoate + CoA + H(+). The enzyme catalyses phytanoyl-CoA + H2O = 3,7,11,15-tetramethylhexadecanoate + CoA + H(+). It functions in the pathway lipid metabolism; fatty acid metabolism. In terms of biological role, catalyzes the hydrolysis of acyl-CoAs into free fatty acids and coenzyme A (CoASH), regulating their respective intracellular levels. Catalyzes the hydrolysis of phytanoyl-CoA and pristanoyl-CoA, two methyl-branched fatty acids derived from phytol, that enter the body via the diet. This is Acyl-coenzyme A thioesterase 6 from Mus musculus (Mouse).